The chain runs to 428 residues: Adenylosuccinate synthetase (428 aa).

GTP contacts are provided by residues 12–18 and 40–42; these read GDEGKGK and GHT. D13 serves as the catalytic Proton acceptor. Positions 13 and 40 each coordinate Mg(2+). Residues 13-16, 38-41, T128, R142, Q223, T238, and R302 contribute to the IMP site; these read DEGK and NAGH. The active-site Proton donor is the H41. 298 to 304 contacts substrate; that stretch reads TTTGRPR. GTP contacts are provided by residues R304, 330–332, and 412–414; these read SID and SVG.

This sequence belongs to the adenylosuccinate synthetase family. In terms of assembly, homodimer. Mg(2+) is required as a cofactor.

The protein localises to the cytoplasm. The enzyme catalyses IMP + L-aspartate + GTP = N(6)-(1,2-dicarboxyethyl)-AMP + GDP + phosphate + 2 H(+). Its pathway is purine metabolism; AMP biosynthesis via de novo pathway; AMP from IMP: step 1/2. Its function is as follows. Plays an important role in the de novo pathway of purine nucleotide biosynthesis. Catalyzes the first committed step in the biosynthesis of AMP from IMP. This Shouchella clausii (strain KSM-K16) (Alkalihalobacillus clausii) protein is Adenylosuccinate synthetase.